Here is a 1653-residue protein sequence, read N- to C-terminus: Cortactin-binding protein 2 (1653 aa).

Disordered regions lie at residues 1–27, 203–222, 268–297, 314–339, and 356–609; these read MATD…AEAA, KKKT…RSTE, QLKR…SVGT, ESTE…KGSV, and HGDL…PSID. Residues 119 to 276 are a coiled coil; it reads RKMQERMSTQ…EQLKRGSDSK (158 aa). Positions 379-389 are enriched in polar residues; that stretch reads GPSTGSPPDLT. Residues 390–408 show a composition bias toward low complexity; that stretch reads SSAAQSPAAAPHGLPPAHG. 3 stretches are compositionally biased toward polar residues: residues 444 to 470, 478 to 490, and 573 to 584; these read GNAN…TSRD, ARNT…SRFT, and TVASSPPSSLPQ. Arg-488 is modified (asymmetric dimethylarginine). ANK repeat units follow at residues 700-730, 734-763, 767-796, 800-829, and 833-862; these read GRPT…DINY, DGHS…QVNA, NGFT…HINH, GGQT…DRSV, and DGWT…PAHG. The interval 860-892 is disordered; sequence AHGNSLNEEEPESDASDLDEGEESSEGKSKPVV. Over residues 866–883 the composition is skewed to acidic residues; it reads NEEEPESDASDLDEGEES. The stretch at 903–933 is one ANK 6 repeat; that stretch reads EGWTAAHIAASKGFKNCLEILCRHRGLEPER. The tract at residues 1441 to 1472 is disordered; it reads ESGAWRKVNTSPRRKSGRFSSPTWNKPDLSNE. Ser-1514 is modified (phosphoserine). Positions 1545–1653 are disordered; that stretch reads DLRTFDSSGN…KNEHIEKLNK (109 aa). 2 stretches are compositionally biased toward polar residues: residues 1549–1564 and 1572–1589; these read FDSS…TANN and KEVS…SNNK. Low complexity predominate over residues 1614-1628; that stretch reads SQNTKRSSSSSNTRQ. Basic and acidic residues predominate over residues 1635–1653; the sequence is SKEENWNLHKNEHIEKLNK.

Interacts with CTTN/cortactin SH3 domain. Interacts with STRN, STRN4/zinedin and MOB4/phocein; this interactions mediate the association with the STRIPAK core complex and may regulate dendritic spine distribution of the STRIPAK complex in hippocampal neurons. Activation of glutamate receptors weakens the interaction with STRN and STRN4.

The protein localises to the cytoplasm. The protein resides in the cell cortex. It localises to the cell projection. Its subcellular location is the dendritic spine. Functionally, regulates the dendritic spine distribution of CTTN/cortactin in hippocampal neurons, and thus controls dendritic spinogenesis and dendritic spine maintenance. Associates with the striatin-interacting phosphatase and kinase (STRIPAK) core complex to regulate dendritic spine distribution of the STRIPAK complex in hippocampal neurons. This chain is Cortactin-binding protein 2 (CTTNBP2), found in Eulemur macaco macaco (Black lemur).